The chain runs to 330 residues: Probable transposase for insertion sequence element ISH11 (330 aa).

It belongs to the transposase 11 family.

Functionally, involved in the transposition of the insertion sequence ISH11. This chain is Probable transposase for insertion sequence element ISH11, found in Halobacterium salinarum (strain ATCC 29341 / DSM 671 / R1).